Reading from the N-terminus, the 357-residue chain is sn-glycerol-3-phosphate import ATP-binding protein UgpC (357 aa).

The ABC transporter domain occupies 4–235 (LKLQAVTKSY…PASLFVASFI (232 aa)). 37–44 (GPSGCGKS) is a binding site for ATP.

This sequence belongs to the ABC transporter superfamily. sn-glycerol-3-phosphate importer (TC 3.A.1.1.3) family. The complex is composed of two ATP-binding proteins (UgpC), two transmembrane proteins (UgpA and UgpE) and a solute-binding protein (UgpB).

The protein localises to the cell inner membrane. It catalyses the reaction sn-glycerol 3-phosphate(out) + ATP + H2O = sn-glycerol 3-phosphate(in) + ADP + phosphate + H(+). In terms of biological role, part of the ABC transporter complex UgpBAEC involved in sn-glycerol-3-phosphate (G3P) import. Responsible for energy coupling to the transport system. This Yersinia pestis bv. Antiqua (strain Antiqua) protein is sn-glycerol-3-phosphate import ATP-binding protein UgpC.